Here is a 330-residue protein sequence, read N- to C-terminus: Olfactory receptor 11H6 (330 aa).

At 1–43 the chain is on the extracellular side; sequence MFFIIHSLVTSVFLTALGPQNRTMHFVTEFVLLGFHGQREMQS. A glycan (N-linked (GlcNAc...) asparagine) is linked at N21. The helical transmembrane segment at 44-64 threads the bilayer; the sequence is CFFSFILVLYLLTLLGNGAIV. At 65–72 the chain is on the cytoplasmic side; the sequence is CAVKLDRR. Residues 73-93 traverse the membrane as a helical segment; that stretch reads LHTPMYILLGNFAFLEIWYIS. At 94 to 117 the chain is on the extracellular side; it reads STVPNMLVNILSEIKTISFSGCFL. The cysteines at positions 115 and 207 are disulfide-linked. The helical transmembrane segment at 118-138 threads the bilayer; that stretch reads QFYFFFSLGTTECFFLSVMAY. Residues 139 to 157 are Cytoplasmic-facing; sequence DRYLAICRPLHYPSIMTGK. The chain crosses the membrane as a helical span at residues 158-178; that stretch reads FCIILVCVCWVGGFLCYPVPI. At 179–215 the chain is on the extracellular side; it reads VLISQLPFCGPNIIDHLVCDPGPLFALACISAPSTEL. The helical transmembrane segment at 216 to 235 threads the bilayer; it reads ICYTFNSMIIFGPFLSILGS. Residues 236 to 255 lie on the Cytoplasmic side of the membrane; sequence YTLVIRAVLCIPSGAGRTKA. Residues 256-276 traverse the membrane as a helical segment; that stretch reads FSTCGSHLMVVSLFYGTLMVM. The Extracellular portion of the chain corresponds to 277 to 289; the sequence is YVSPTSGNPAGMQ. A helical membrane pass occupies residues 290–310; that stretch reads KIITLVYTAMTPFLNPLIYSL. At 311–330 the chain is on the cytoplasmic side; it reads RNKDMKDALKRVLGLTVSQN.

It belongs to the G-protein coupled receptor 1 family.

The protein resides in the cell membrane. Functionally, odorant receptor. This Homo sapiens (Human) protein is Olfactory receptor 11H6 (OR11H6).